Consider the following 142-residue polypeptide: Transcription antitermination protein NusB (142 aa).

Belongs to the NusB family.

In terms of biological role, involved in transcription antitermination. Required for transcription of ribosomal RNA (rRNA) genes. Binds specifically to the boxA antiterminator sequence of the ribosomal RNA (rrn) operons. The protein is Transcription antitermination protein NusB of Thermotoga sp. (strain RQ2).